A 271-amino-acid polypeptide reads, in one-letter code: tRNA pseudouridine synthase A (271 aa).

D52 (nucleophile) is an active-site residue. Y110 lines the substrate pocket.

It belongs to the tRNA pseudouridine synthase TruA family. Homodimer.

The enzyme catalyses uridine(38/39/40) in tRNA = pseudouridine(38/39/40) in tRNA. In terms of biological role, formation of pseudouridine at positions 38, 39 and 40 in the anticodon stem and loop of transfer RNAs. The polypeptide is tRNA pseudouridine synthase A (Burkholderia mallei (strain NCTC 10247)).